Reading from the N-terminus, the 185-residue chain is Threonylcarbamoyl-AMP synthase (185 aa).

The region spanning 1–185 is the YrdC-like domain; the sequence is MKNLNQVVDA…AKTGNTLRQG (185 aa).

Belongs to the SUA5 family. TsaC subfamily.

It is found in the cytoplasm. The catalysed reaction is L-threonine + hydrogencarbonate + ATP = L-threonylcarbamoyladenylate + diphosphate + H2O. Its function is as follows. Required for the formation of a threonylcarbamoyl group on adenosine at position 37 (t(6)A37) in tRNAs that read codons beginning with adenine. Catalyzes the conversion of L-threonine, HCO(3)(-)/CO(2) and ATP to give threonylcarbamoyl-AMP (TC-AMP) as the acyladenylate intermediate, with the release of diphosphate. The sequence is that of Threonylcarbamoyl-AMP synthase from Aliivibrio fischeri (strain ATCC 700601 / ES114) (Vibrio fischeri).